The primary structure comprises 135 residues: Ribosome-binding factor A (135 aa).

The interval 115 to 135 is disordered; that stretch reads VNEDKRKQQDSGREEDQAGEE. Residues 116 to 135 show a composition bias toward basic and acidic residues; sequence NEDKRKQQDSGREEDQAGEE.

It belongs to the RbfA family. Monomer. Binds 30S ribosomal subunits, but not 50S ribosomal subunits or 70S ribosomes.

The protein resides in the cytoplasm. In terms of biological role, one of several proteins that assist in the late maturation steps of the functional core of the 30S ribosomal subunit. Associates with free 30S ribosomal subunits (but not with 30S subunits that are part of 70S ribosomes or polysomes). Required for efficient processing of 16S rRNA. May interact with the 5'-terminal helix region of 16S rRNA. This Vibrio campbellii (strain ATCC BAA-1116) protein is Ribosome-binding factor A.